The chain runs to 450 residues: Cyclic GMP-AMP phosphodiesterase SMPDL3A (450 aa).

Residues 1–22 form the signal peptide; the sequence is MARLGALVCCLLAAWHCRPGLG. Positions 42 and 44 each coordinate Zn(2+). The cysteines at positions 59 and 78 are disulfide-linked. Asp107 provides a ligand contact to Zn(2+). An ATP-binding site is contributed by His111. N-linked (GlcNAc...) asparagine glycans are attached at residues Asn124 and Asn128. A Zn(2+)-binding site is contributed by Asn148. Residues Asn148 and His149 each contribute to the ATP site. Residues Asn219 and Asn235 are each glycosylated (N-linked (GlcNAc...) asparagine). Residues His249, His290, and His292 each coordinate Zn(2+). Residues Asn353 and Asn370 are each glycosylated (N-linked (GlcNAc...) asparagine). Disulfide bonds link Cys417/Cys421 and Cys427/Cys440.

The protein belongs to the acid sphingomyelinase family. In terms of assembly, monomer. Homodimer; homodimerizes following 2',3'-cGAMP-binding. Zn(2+) is required as a cofactor.

The protein resides in the secreted. The enzyme catalyses 2',3'-cGAMP + H2O = 5'-pGpA(2'-5') + H(+). The catalysed reaction is 5'-pGpA(2'-5') + H2O = 5'-GpA(2'-5') + phosphate. It carries out the reaction a ribonucleoside 5'-triphosphate + H2O = a ribonucleoside 5'-diphosphate + phosphate + H(+). It catalyses the reaction ATP + H2O = ADP + phosphate + H(+). Cyclic-nucleotide phosphodiesterase that acts as a negative regulator of innate immunity by mediating degradation of 2',3'-cGAMP, thereby inhibiting the cGAS-STING signaling. Specifically linearizes 2',3'-cGAMP into 2'5'-bond pGpA and further hydrolyzes pGpA to produce GpA. Also has in vitro nucleotide phosphodiesterase activity with nucleoside triphosphates, such as ATP. Has in vitro activity with p-nitrophenyl-TMP. Has lower activity with nucleoside diphosphates, and no activity with nucleoside monophosphates. Has in vitro activity with CDP-choline, giving rise to CMP and phosphocholine. Has in vitro activity with CDP-ethanolamine. Does not have sphingomyelin phosphodiesterase activity. This is Cyclic GMP-AMP phosphodiesterase SMPDL3A (SMPDL3A) from Bos taurus (Bovine).